The following is a 297-amino-acid chain: 2-phospho-L-lactate transferase (297 aa).

A 7,8-didemethyl-8-hydroxy-5-deazariboflavin-binding site is contributed by Asp-49.

The protein belongs to the CofD family. In terms of assembly, homodimer. Mg(2+) is required as a cofactor.

It catalyses the reaction (2S)-lactyl-2-diphospho-5'-guanosine + 7,8-didemethyl-8-hydroxy-5-deazariboflavin = oxidized coenzyme F420-0 + GMP + H(+). Its pathway is cofactor biosynthesis; coenzyme F420 biosynthesis. In terms of biological role, catalyzes the transfer of the 2-phospholactate moiety from (2S)-lactyl-2-diphospho-5'-guanosine to 7,8-didemethyl-8-hydroxy-5-deazariboflavin (FO) with the formation of oxidized coenzyme F420-0 and GMP. This Methanospirillum hungatei JF-1 (strain ATCC 27890 / DSM 864 / NBRC 100397 / JF-1) protein is 2-phospho-L-lactate transferase.